Here is a 79-residue protein sequence, read N- to C-terminus: PLLLTLVVVTIVCLDLGYTMTCCNQQSSQPKTTTNCAESSCYKKTWSDHRGTRIERGCGCPQVKSGIKLECCHTNECNN.

A signal peptide spans proline 1–threonine 19. 4 cysteine pairs are disulfide-bonded: cysteine 22-cysteine 41, cysteine 36-cysteine 58, cysteine 60-cysteine 71, and cysteine 72-cysteine 77.

Belongs to the three-finger toxin family. Short-chain subfamily. Type I alpha-neurotoxin sub-subfamily. As to expression, expressed by the venom gland.

Its subcellular location is the secreted. Its function is as follows. Binds to muscle nicotinic acetylcholine receptor (nAChR) and inhibit acetylcholine from binding to the receptor, thereby impairing neuromuscular transmission. The protein is Short neurotoxin 2 of Hydrophis cyanocinctus (Asian annulated sea snake).